We begin with the raw amino-acid sequence, 328 residues long: UDP-glucose 4-epimerase (328 aa).

NAD(+)-binding positions include 20–21, 41–46, 57–58, 77–81, serine 123, tyrosine 149, and lysine 153; these read FV, VRHAVN, DI, and CAARA. Residues serine 123 and tyrosine 149 each contribute to the substrate site. Tyrosine 149 acts as the Proton acceptor in catalysis. Residues 198–199 and 215–217 contribute to the substrate site; these read GI and SIN.

Belongs to the NAD(P)-dependent epimerase/dehydratase family. Homodimer. The cofactor is NAD(+).

The catalysed reaction is UDP-alpha-D-glucose = UDP-alpha-D-galactose. The protein operates within bacterial outer membrane biogenesis; LPS O-antigen biosynthesis. In terms of biological role, involved in the metabolism of galactose. Catalyzes the conversion of UDP-galactose (UDP-Gal) to UDP-glucose (UDP-Glc) through a mechanism involving the transient reduction of NAD. This chain is UDP-glucose 4-epimerase (galE), found in Vibrio cholerae.